A 310-amino-acid polypeptide reads, in one-letter code: p-hydroxybenzoic acid efflux pump subunit AaeA (310 aa).

Residues 12–32 (AITVVLVILAFIAIFNAWVYY) traverse the membrane as a helical segment.

It belongs to the membrane fusion protein (MFP) (TC 8.A.1) family.

It localises to the cell inner membrane. Its function is as follows. Forms an efflux pump with AaeB. In Escherichia coli O8 (strain IAI1), this protein is p-hydroxybenzoic acid efflux pump subunit AaeA.